Here is a 1238-residue protein sequence, read N- to C-terminus: Anion exchange protein 2 (1238 aa).

Residues Met-1–Gly-238 form a disordered region. The Cytoplasmic portion of the chain corresponds to Met-1 to Gln-704. Basic and acidic residues-rich tracts occupy residues Asp-37 to Glu-49 and Gly-58 to Arg-75. Composition is skewed to basic residues over residues Gln-76–Leu-85 and Arg-94–Pro-110. Residues Thr-120–Glu-133 show a composition bias toward acidic residues. 4 positions are modified to phosphoserine: Ser-132, Ser-144, Ser-170, and Ser-172. Over residues Thr-141–Phe-154 the composition is skewed to polar residues. The segment covering Gly-205–Ser-215 has biased composition (gly residues). Ser-239 is modified (phosphoserine). Thr-253 is subject to Phosphothreonine. Lys-270 bears the N6-methyllysine mark. The disordered stretch occupies residues Val-277–Lys-315. Basic residues predominate over residues Val-280–Ala-289. Ser-439 bears the Phosphoserine mark. A disordered region spans residues Ser-445–Ile-466. The next 4 helical transmembrane spans lie at Cys-705 to Gly-728, Leu-734 to Phe-771, Val-791 to Val-813, and Ile-823 to Phe-844. The segment at Cys-705–Val-1238 is membrane (anion exchange). Topologically, residues Gln-845–Thr-897 are extracellular. Asn-856, Asn-865, and Asn-879 each carry an N-linked (GlcNAc...) asparagine glycan. The span at Ser-858 to Thr-869 shows a compositional bias: polar residues. The disordered stretch occupies residues Ser-858–Gln-892. The helical transmembrane segment at Ala-898 to Leu-915 threads the bilayer. The Cytoplasmic segment spans residues Arg-916–Arg-930. Helical transmembrane passes span Val-931–Ile-951, Pro-985–Met-1007, Leu-1033–Ala-1054, Val-1088–Tyr-1133, and Met-1160–Leu-1196. Cys-1170 carries S-palmitoyl cysteine lipidation.

Belongs to the anion exchanger (TC 2.A.31) family. As to expression, expressed in the cochlea (at protein level).

The protein localises to the apical cell membrane. The protein resides in the basolateral cell membrane. The enzyme catalyses hydrogencarbonate(in) + chloride(out) = hydrogencarbonate(out) + chloride(in). Its function is as follows. Sodium-independent anion exchanger which mediates the electroneutral exchange of chloride for bicarbonate ions across the cell membrane. Plays an important role in osteoclast differentiation and function. Regulates bone resorption and calpain-dependent actin cytoskeleton organization in osteoclasts via anion exchange-dependent control of pH. Essential for intracellular pH regulation in CD8(+) T-cells upon CD3 stimulation, modulating CD8(+) T-cell response. This Cavia porcellus (Guinea pig) protein is Anion exchange protein 2 (SLC4A2).